Reading from the N-terminus, the 403-residue chain is Serine/threonine transporter SstT (403 aa).

10 helical membrane-spanning segments follow: residues 15–35 (LGLI…AIVW), 49–69 (FISA…MTAI), 85–105 (LLYV…SFIF), 142–162 (ALLN…GMML), 183–203 (IVQL…AGTL), 218–238 (LAVI…LIVF), 246–268 (YPLV…SSAA), 289–309 (ISIP…ISVI), 317–337 (LGIG…SLAA), and 362–382 (PDVA…QDAT).

The protein belongs to the dicarboxylate/amino acid:cation symporter (DAACS) (TC 2.A.23) family.

The protein localises to the cell inner membrane. The catalysed reaction is L-serine(in) + Na(+)(in) = L-serine(out) + Na(+)(out). It carries out the reaction L-threonine(in) + Na(+)(in) = L-threonine(out) + Na(+)(out). Involved in the import of serine and threonine into the cell, with the concomitant import of sodium (symport system). This chain is Serine/threonine transporter SstT, found in Chromohalobacter salexigens (strain ATCC BAA-138 / DSM 3043 / CIP 106854 / NCIMB 13768 / 1H11).